Reading from the N-terminus, the 270-residue chain is Mlc titration factor A (270 aa).

Residues His-111, His-148, His-152, and Glu-211 each coordinate Zn(2+).

It belongs to the MtfA family. As to quaternary structure, interacts with Mlc. Requires Zn(2+) as cofactor.

It is found in the cytoplasm. Functionally, involved in the modulation of the activity of the glucose-phosphotransferase system (glucose-PTS). Interacts with the transcriptional repressor Mlc, preventing its interaction with DNA and leading to the modulation of expression of genes regulated by Mlc, including ptsG, which encodes the PTS system glucose-specific EIICB component. Its function is as follows. Shows zinc-dependent metallopeptidase activity. In Yersinia pestis bv. Antiqua (strain Nepal516), this protein is Mlc titration factor A.